A 448-amino-acid chain; its full sequence is Ribosomal protein uS12 methylthiotransferase RimO (448 aa).

Residues 7 to 123 form the MTTase N-terminal domain; sequence EKVSLVSLGC…IAEIIAEKKQ (117 aa). Positions 16, 52, 86, 161, 165, and 168 each coordinate [4Fe-4S] cluster. The Radical SAM core domain occupies 147 to 377; sequence SSPHYTAYLK…MRTQARVSFK (231 aa). Positions 380–448 constitute a TRAM domain; sequence RTLVDSEEDV…DYDLIGEIVD (69 aa).

Belongs to the methylthiotransferase family. RimO subfamily. [4Fe-4S] cluster serves as cofactor.

Its subcellular location is the cytoplasm. The catalysed reaction is L-aspartate(89)-[ribosomal protein uS12]-hydrogen + (sulfur carrier)-SH + AH2 + 2 S-adenosyl-L-methionine = 3-methylsulfanyl-L-aspartate(89)-[ribosomal protein uS12]-hydrogen + (sulfur carrier)-H + 5'-deoxyadenosine + L-methionine + A + S-adenosyl-L-homocysteine + 2 H(+). Its function is as follows. Catalyzes the methylthiolation of an aspartic acid residue of ribosomal protein uS12. The sequence is that of Ribosomal protein uS12 methylthiotransferase RimO from Citrifermentans bemidjiense (strain ATCC BAA-1014 / DSM 16622 / JCM 12645 / Bem) (Geobacter bemidjiensis).